The primary structure comprises 322 residues: Deoxyhypusine hydroxylase (322 aa).

HEAT-like PBS-type repeat units follow at residues 76–102 (LKHE…VMLD), 109–135 (VRHE…SRRE), 234–260 (FKHE…VLKR), and 267–293 (VRHE…HLQD). The Fe cation site is built by His78, Glu79, His111, Glu112, His236, Glu237, His269, and Glu270.

Belongs to the deoxyhypusine hydroxylase family. Fe(2+) is required as a cofactor.

Its subcellular location is the cytoplasm. The protein localises to the nucleus. The catalysed reaction is [eIF5A protein]-deoxyhypusine + AH2 + O2 = [eIF5A protein]-hypusine + A + H2O. It participates in protein modification; eIF5A hypusination. In terms of biological role, catalyzes the hydroxylation of the N(6)-(4-aminobutyl)-L-lysine intermediate to form hypusine, an essential post-translational modification only found in mature eIF-5A factor. The chain is Deoxyhypusine hydroxylase from Eremothecium gossypii (strain ATCC 10895 / CBS 109.51 / FGSC 9923 / NRRL Y-1056) (Yeast).